Consider the following 479-residue polypeptide: BRAP2 RING ZnF UBP domain-containing protein 2 (479 aa).

The RING-type; atypical zinc finger occupies 167–207 (CPVCLERLDQDTGGILTTMCNHSFHCSCISNWPDSSCPVCR). The segment at 201-294 (SSCPVCRYCQ…GKLVELNSHG (94 aa)) adopts a UBP-type; degenerate zinc-finger fold. Residues cysteine 218, cysteine 221, cysteine 230, cysteine 233, cysteine 238, histidine 245, histidine 249, and histidine 255 each contribute to the Zn(2+) site. The stretch at 328–442 (NELLQAQLEN…MAQMDGESEV (115 aa)) forms a coiled coil. Residues 434–479 (AQMDGESEVSETKEVQDATVSTTNTSSSGAGNVIHANKKKSNRRKG) are disordered. Residues 451 to 466 (ATVSTTNTSSSGAGNV) show a composition bias toward low complexity. The segment covering 469-479 (ANKKKSNRRKG) has biased composition (basic residues).

Component of the heteromeric E3 ligase complex made of BRIZ1 and BRIZ2. Forms heterooligomers with BRIZ1 via coiled-coil domains.

It carries out the reaction S-ubiquitinyl-[E2 ubiquitin-conjugating enzyme]-L-cysteine + [acceptor protein]-L-lysine = [E2 ubiquitin-conjugating enzyme]-L-cysteine + N(6)-ubiquitinyl-[acceptor protein]-L-lysine.. It functions in the pathway protein modification; protein ubiquitination. Its function is as follows. RING-type ubiquitin E3 ligase that binds ubiquitin and is required for seed germination and post-germination growth. This is BRAP2 RING ZnF UBP domain-containing protein 2 from Arabidopsis thaliana (Mouse-ear cress).